The following is a 408-amino-acid chain: Gustatory receptor 10a (408 aa).

The Cytoplasmic segment spans residues 1 to 20 (MTSPDERKSFWERHEFKFYR). The helical transmembrane segment at 21–38 (YGHVYALIYGQVVIDYVP) threads the bilayer. Topologically, residues 39-48 (QRALKRGVKV) are extracellular. Residues 49–69 (LLIAYGHLFSMLLIVVLPGYF) form a helical membrane-spanning segment. The Cytoplasmic portion of the chain corresponds to 70 to 86 (CYHFRTLTDTLDRRLQL). A helical transmembrane segment spans residues 87 to 107 (LFYVSFTNTAIKYATVIVTYV). The Extracellular segment spans residues 108–144 (ANTVHFEAINQRCTMQRTHLEFEFKNAPQEPKRPFEF). Residues 145 to 165 (FMYFKFCLINLMMMIQVCGIF) traverse the membrane as a helical segment. Residues 166–270 (AQYGEVGKGS…RESFRMHQFQ (105 aa)) lie on the Cytoplasmic side of the membrane. Residues 271–291 (LIGLMLSTLINNLTNFYTLFH) form a helical membrane-spanning segment. At 292–304 (MLAKQSLEEVSYP) the chain is on the extracellular side. A helical membrane pass occupies residues 305-325 (VVVGSVYATGFYIDTYIVALI). The Cytoplasmic portion of the chain corresponds to 326 to 381 (NEHIKLELEAVALTMRRFAEPREMDERLTREIEHLSLELLNYQPPMLCGLLHLDRR). A helical transmembrane segment spans residues 382–402 (LVYLIAVTAFSYFITLVQFDL). Residues 403–408 (YLRKKS) lie on the Extracellular side of the membrane.

It belongs to the insect chemoreceptor superfamily. Gustatory receptor (GR) family. Gr10a subfamily. As to expression, expressed in the medial aspect of the third antennal segment, and in neurons of the terminal external chemosensory organ of larvae.

The protein resides in the cell membrane. In terms of biological role, probable gustatory receptor which mediates acceptance or avoidance behavior, depending on its substrates. In Drosophila melanogaster (Fruit fly), this protein is Gustatory receptor 10a (Gr10a).